Consider the following 283-residue polypeptide: Phosphatidylglycerol--prolipoprotein diacylglyceryl transferase (283 aa).

4 helical membrane passes run 20 to 40 (LGPV…FVAM), 51 to 71 (GGNP…GIIG), 97 to 117 (ITNG…AVYF), and 123 to 143 (GVAF…AQAI). R145 serves as a coordination point for a 1,2-diacyl-sn-glycero-3-phospho-(1'-sn-glycerol). The next 2 helical transmembrane spans lie at 192–212 (VHPT…VLLW) and 255–275 (INVI…FALR).

This sequence belongs to the Lgt family.

The protein localises to the cell membrane. The catalysed reaction is L-cysteinyl-[prolipoprotein] + a 1,2-diacyl-sn-glycero-3-phospho-(1'-sn-glycerol) = an S-1,2-diacyl-sn-glyceryl-L-cysteinyl-[prolipoprotein] + sn-glycerol 1-phosphate + H(+). It functions in the pathway protein modification; lipoprotein biosynthesis (diacylglyceryl transfer). Its function is as follows. Catalyzes the transfer of the diacylglyceryl group from phosphatidylglycerol to the sulfhydryl group of the N-terminal cysteine of a prolipoprotein, the first step in the formation of mature lipoproteins. The sequence is that of Phosphatidylglycerol--prolipoprotein diacylglyceryl transferase from Corynebacterium diphtheriae (strain ATCC 700971 / NCTC 13129 / Biotype gravis).